A 1020-amino-acid chain; its full sequence is Retinoblastoma-related protein (1020 aa).

2 stretches are compositionally biased toward polar residues: residues 382-391 (SPTKTITSPL) and 398-409 (ASHTNGILGSTN). The disordered stretch occupies residues 382 to 409 (SPTKTITSPLSPHRSPASHTNGILGSTN). Residues 415-616 (TPVSTAMTTA…EKGSSMYNSL (202 aa)) are domain A. The pocket stretch occupies residues 415–869 (TPVSTAMTTA…NEIFIPAAKP (455 aa)). Residues 617 to 737 (TVARPSLSAE…PGGGGETCAE (121 aa)) are spacer. A domain B region spans residues 738 to 869 (TGINIFFSKI…NEIFIPAAKP (132 aa)).

It belongs to the retinoblastoma protein (RB) family.

The protein resides in the nucleus. In terms of biological role, regulator of biological processes that recruits a histone deacetylase to control gene transcription. May play a role in the entry into mitosis, negatively regulating the cell proliferation. Formation of stable complexes with geminiviridae replication-associated proteins may create a cellular environment which favors viral DNA replication. This Ricinus communis (Castor bean) protein is Retinoblastoma-related protein (RBR).